The primary structure comprises 542 residues: Phosphoenolpyruvate carboxykinase (ATP) (542 aa).

Residues arginine 67, tyrosine 208, and lysine 214 each contribute to the substrate site. Residues lysine 214, histidine 233, and 249 to 257 (GLSGTGKTT) each bind ATP. Mn(2+)-binding residues include lysine 214 and histidine 233. Mn(2+) is bound at residue aspartate 270. ATP-binding positions include glutamate 298, arginine 334, 450 to 451 (RI), and threonine 456. Position 334 (arginine 334) interacts with substrate.

Belongs to the phosphoenolpyruvate carboxykinase (ATP) family. Monomer. Requires Mn(2+) as cofactor.

Its subcellular location is the cytoplasm. It carries out the reaction oxaloacetate + ATP = phosphoenolpyruvate + ADP + CO2. The protein operates within carbohydrate biosynthesis; gluconeogenesis. Functionally, involved in the gluconeogenesis. Catalyzes the conversion of oxaloacetate (OAA) to phosphoenolpyruvate (PEP) through direct phosphoryl transfer between the nucleoside triphosphate and OAA. This is Phosphoenolpyruvate carboxykinase (ATP) from Vibrio vulnificus (strain CMCP6).